The primary structure comprises 95 residues: Large ribosomal subunit protein eL30 (95 aa).

Belongs to the eukaryotic ribosomal protein eL30 family.

The protein is Large ribosomal subunit protein eL30 of Methanospirillum hungatei JF-1 (strain ATCC 27890 / DSM 864 / NBRC 100397 / JF-1).